The following is a 292-amino-acid chain: tRNA-cytidine(32) 2-sulfurtransferase (292 aa).

A PP-loop motif motif is present at residues 54–59; sequence SGGKDS. Residues C129, C132, and C220 each contribute to the [4Fe-4S] cluster site.

Belongs to the TtcA family. In terms of assembly, homodimer. Requires Mg(2+) as cofactor. The cofactor is [4Fe-4S] cluster.

The protein resides in the cytoplasm. It catalyses the reaction cytidine(32) in tRNA + S-sulfanyl-L-cysteinyl-[cysteine desulfurase] + AH2 + ATP = 2-thiocytidine(32) in tRNA + L-cysteinyl-[cysteine desulfurase] + A + AMP + diphosphate + H(+). The protein operates within tRNA modification. Catalyzes the ATP-dependent 2-thiolation of cytidine in position 32 of tRNA, to form 2-thiocytidine (s(2)C32). The sulfur atoms are provided by the cysteine/cysteine desulfurase (IscS) system. This chain is tRNA-cytidine(32) 2-sulfurtransferase, found in Cereibacter sphaeroides (strain ATCC 17025 / ATH 2.4.3) (Rhodobacter sphaeroides).